The sequence spans 209 residues: Translation initiation factor IF-3 (209 aa).

It belongs to the IF-3 family. Monomer.

Its subcellular location is the cytoplasm. IF-3 binds to the 30S ribosomal subunit and shifts the equilibrium between 70S ribosomes and their 50S and 30S subunits in favor of the free subunits, thus enhancing the availability of 30S subunits on which protein synthesis initiation begins. This chain is Translation initiation factor IF-3, found in Chlorobium phaeovibrioides (strain DSM 265 / 1930) (Prosthecochloris vibrioformis (strain DSM 265)).